A 214-amino-acid chain; its full sequence is Small ribosomal subunit protein uS3c (214 aa).

The KH type-2 domain occupies 39 to 111 (IRTYIHTISK…QLTINVLEVE (73 aa)).

This sequence belongs to the universal ribosomal protein uS3 family. In terms of assembly, part of the 30S ribosomal subunit.

Its subcellular location is the plastid. It is found in the chloroplast. This Phaeodactylum tricornutum (strain CCAP 1055/1) protein is Small ribosomal subunit protein uS3c (rps3).